Consider the following 227-residue polypeptide: A-type potassium channel modulatory protein KCNIP1 (227 aa).

In terms of domain architecture, EF-hand 1; degenerate spans 38–94 (LEMTMVCHRPEGLEQLEAQTNFTKRELQVLYRGFKNECPSGVVNEETFKQIYAQFFP). EF-hand domains lie at 97–132 (DASTYAHYLFNAFDTTQTGSVKFEDFVTALSILLRG), 133–168 (TVHEKLRWTFNLYDINKDGYINKEEMMDIVKAIYDM), and 181–216 (TPRQHVDVFFQKMDKNKDGIVTLDEFLESCQEDDNI). The Ca(2+) site is built by Asp-146, Asn-148, Asp-150, Tyr-152, Glu-157, Asp-194, Asn-196, Asp-198, and Glu-205. Positions 214-227 (DNIMRSLQLFQNVM) are interaction with KCND2.

Belongs to the recoverin family. Component of heteromultimeric potassium channels. Identified in potassium channel complexes containing KCND1, KCND2, KCND3, KCNIP1, KCNIP2, KCNIP3, KCNIP4, DPP6 and DPP10. Part of a heterooctamer composed of the tetrameric channel and four KCNIP1 chains. Probably part of a complex consisting of KCNIP1, KCNIP2 isoform 3 and KCND2. Self-associates to form homodimers and homotetramers. Interacts with KCNIP2 isoform 3 in a calcium-dependent manner. Interacts with KCND2; this interaction mediates the capture of both the N- and C-terminus of KCND2, thus preventing KCND2 N-type inactivation and modulates the channel gating kinetics. Interacts with KCND3; each KCNIP1 monomer interacts with two adjacent KCND3 subunits, through both the N-terminal inactivation ball of a KCND3 subunit and a C-terminal helix from the adjacent KCND3 subunit, clamping them together; this interaction stabilizes the tetrameric form and modulates the channel gating kinetics namely channel activation and inactivation kinetics and rate of recovery from inactivation. Expressed in brain. Found in a subpopulation of neurons widely distributed and enriched in Purkinje cells of the cerebellum and in the reticular thalamic and medial habenular nuclei.

It is found in the cell membrane. It localises to the cytoplasm. The protein localises to the cell projection. Its subcellular location is the dendrite. Functionally, regulatory subunit of Kv4/D (Shal)-type voltage-gated rapidly inactivating A-type potassium channels. Regulates channel density, inactivation kinetics and rate of recovery from inactivation in a calcium-dependent and isoform-specific manner. Modulates KCND2/Kv4.2 currents. In vitro, modulates KCND1/Kv4.1 currents. Increases the presence of KCND2 at the cell surface. The protein is A-type potassium channel modulatory protein KCNIP1 of Mus musculus (Mouse).